A 338-amino-acid polypeptide reads, in one-letter code: Ferrochelatase (338 aa).

Fe cation contacts are provided by His-189 and Glu-294.

Belongs to the ferrochelatase family.

It is found in the cytoplasm. The enzyme catalyses heme b + 2 H(+) = protoporphyrin IX + Fe(2+). Its pathway is porphyrin-containing compound metabolism; protoheme biosynthesis; protoheme from protoporphyrin-IX: step 1/1. Catalyzes the ferrous insertion into protoporphyrin IX. This chain is Ferrochelatase, found in Pseudomonas putida (strain ATCC 47054 / DSM 6125 / CFBP 8728 / NCIMB 11950 / KT2440).